Here is a 301-residue protein sequence, read N- to C-terminus: Rhodopsin (301 aa).

Residues 1-18 (LHMIHLHWYQYPPMNPMM) are Extracellular-facing. Residues 19–43 (YPLLLIFMLFTGILCLAGNFVTIWV) form a helical membrane-spanning segment. At 44-55 (FMNTKSLRTPAN) the chain is on the cytoplasmic side. The helical transmembrane segment at 56–78 (LLVVNLAMSDFLMMFTMFPPMMV) threads the bilayer. The Extracellular portion of the chain corresponds to 79 to 92 (TCYYHTWTLGPTFC). A disulfide bridge links cysteine 92 with cysteine 169. The chain crosses the membrane as a helical span at residues 93–115 (QVYGFLGNLCGCASIWTMVFITF). The 'Ionic lock' involved in activated form stabilization signature appears at 116–118 (DRY). The Cytoplasmic portion of the chain corresponds to 116–134 (DRYNVIVKGVAGEPLSTKK). A helical transmembrane segment spans residues 135-155 (ASLWILIVWVLSLAWCMAPFF). Over 156–182 (GWNRYVPEGNLTGCGTDYLSEDILSRS) the chain is Extracellular. Asparagine 165 carries N-linked (GlcNAc...) asparagine glycosylation. The chain crosses the membrane as a helical span at residues 183 to 204 (YLYIYSTWVYFLPLTITIYCYV). Over 205–245 (FIIKAVAAHEKGMRDQAKKMGIKSLRNEEAQKTSAECRLAK) the chain is Cytoplasmic. The helical transmembrane segment at 246–267 (IAMTTVALWFIAWTPYLLINWV) threads the bilayer. At 268–278 (GMFARSYLSPV) the chain is on the extracellular side. The helical transmembrane segment at 279 to 300 (YTIWGYVFAKANAVYNPIVYAI) threads the bilayer. N6-(retinylidene)lysine is present on lysine 288.

It belongs to the G-protein coupled receptor 1 family. Opsin subfamily. As to quaternary structure, homodimer. Interacts with GNAQ. Post-translationally, contains one covalently linked retinal chromophore.

It is found in the cell projection. It localises to the rhabdomere membrane. Its function is as follows. Photoreceptor required for image-forming vision at low light intensity. Can use both retinal and 3-dehydroretinal as visual pigment. Light-induced isomerization of 11-cis to all-trans retinal triggers a conformational change that activates signaling via G-proteins. Signaling via GNAQ probably mediates the activation of phospholipase C. This Procambarus milleri (Miami cave crayfish) protein is Rhodopsin (RHO).